The sequence spans 121 residues: MRLNSKQPRKQRKFLYNAPLHLRQKMMAAPLSKELREKYKIRNLPVRVGDKVRIMRGDFKGHEGKVVEVDLKRYRIYVEGATLRKTNGTEVFYPIHPSNVMIIELNLDDERRKKIIERRAG.

Belongs to the universal ribosomal protein uL24 family. As to quaternary structure, part of the 50S ribosomal subunit.

In terms of biological role, one of two assembly initiator proteins, it binds directly to the 5'-end of the 23S rRNA, where it nucleates assembly of the 50S subunit. Its function is as follows. Located at the polypeptide exit tunnel on the outside of the subunit. This Pyrococcus abyssi (strain GE5 / Orsay) protein is Large ribosomal subunit protein uL24.